Consider the following 293-residue polypeptide: Zinc metalloproteinase nas-2 (293 aa).

The signal sequence occupies residues 1–17 (MIFPLLLTLILPNFVAP). The propeptide occupies 18–67 (KVLEPEKDDEIAVSTQREKTFFDMKLILTKLPTFEPSKYGHINIPLRKKR). A Peptidase M12A domain is found at 67-260 (RGIALHPLQW…ININTFYKCK (194 aa)). A glycan (N-linked (GlcNAc...) asparagine) is linked at asparagine 111. 2 cysteine pairs are disulfide-bonded: cysteine 114-cysteine 259 and cysteine 139-cysteine 169. Histidine 180 lines the Zn(2+) pocket. Residue glutamate 181 is part of the active site. Zn(2+) contacts are provided by histidine 184 and histidine 190. Asparagine 287 is a glycosylation site (N-linked (GlcNAc...) asparagine).

Requires Zn(2+) as cofactor.

The protein localises to the secreted. Functionally, metalloprotease. In Caenorhabditis elegans, this protein is Zinc metalloproteinase nas-2 (nas-2).